Consider the following 158-residue polypeptide: MTELKLIHIFTDGSCLGNPGPGGYGIVMNYKGHTKEMSDGFALTTNNRMELLAPIVALEALKEPCKVILTSDSQYMRQGITTWIHGWKKKGWMTSNRTPVKNVDLWKRLDKAAQLHHIDWRWVKGHAGHAENERCDQLARAAAEASPTQIDEGYQAES.

Residues 3-144 form the RNase H type-1 domain; sequence ELKLIHIFTD…CDQLARAAAE (142 aa). Residues Asp12, Glu50, Asp72, and Asp136 each contribute to the Mg(2+) site.

It belongs to the RNase H family. In terms of assembly, monomer. Mg(2+) is required as a cofactor.

It localises to the cytoplasm. The enzyme catalyses Endonucleolytic cleavage to 5'-phosphomonoester.. Its function is as follows. Endonuclease that specifically degrades the RNA of RNA-DNA hybrids. The chain is Ribonuclease H from Shewanella sp. (strain MR-4).